Here is a 530-residue protein sequence, read N- to C-terminus: MYEIQSFHAGLYDSKNAPVLTGIMRGIEREGLRIDRDGKLAQTPHPVALGSALTHPQITTDFSEALLEFITPPTHRVEDLFKQLYDIQGYTLSKLDDELIWSSSMPCVLNDDATIPVAQYGSSNNGTMKTVYRVGLGHRYGRAMQTVAGLHYNFSLPDAFWSFLHREEYSLLDLQDFKDQKYFALIRNFRRYYWLLVYLFGASPALCGSFIKGREHNLQPLIDERTLHLPYATSLRMGDLGYQSSAQESLYVCYNDKQSYITTLCAAITTPIDEYKAIGLQDEKGEFKQLNTSLLQIENEFYSSIRPKRTAKHGETALSALRNRGVEYIEVRCLDIDPFDPLGVNKPQVRFLDTFLLYCALQDSPDTSPEESANILRNQKTVVTEGRSPKALIESFTKGKIPLKQAGEALIKAMRPVAELLDIAHETEEHTQSLETQLAAILNPELTPSARIISHLSAKKLPYAHYALAQSRHHHETLLAKKPSNNTMQQFEKMAAESLDKQTRLEQKNSGNFSEFLQEYYKQYQMCCDK.

It belongs to the glutamate--cysteine ligase type 1 family. Type 1 subfamily.

The enzyme catalyses L-cysteine + L-glutamate + ATP = gamma-L-glutamyl-L-cysteine + ADP + phosphate + H(+). It functions in the pathway sulfur metabolism; glutathione biosynthesis; glutathione from L-cysteine and L-glutamate: step 1/2. This is Glutamate--cysteine ligase from Saccharophagus degradans (strain 2-40 / ATCC 43961 / DSM 17024).